A 492-amino-acid chain; its full sequence is Aerolysin-4 (492 aa).

Positions 1 to 23 (MKKLKITGLSLIISGLLMAQAQA) are cleaved as a signal peptide. 2 cysteine pairs are disulfide-bonded: C42-C98 and C182-C187. The tract at residues 68 to 84 (WQISGLANGWVIMGPGY) is interaction with host N-linked glycan. The part of the transmembrane beta-barrel after proteolytic activation of the toxin and insertion into the host membrane stretch occupies residues 256–288 (YGLSEKVTTKNKFKWPLVGETELSIEIAANQSW). The segment at 346–355 (RWGGNAWYTH) is interaction with glycans from host GPI-anchor. A propeptide spanning residues 446–492 (AAASHSSRARNLSAGQGLRLEIPLDAQELSGLGFNNVSLSVTPAANQ) is cleaved from the precursor.

Belongs to the aerolysin family. As to quaternary structure, homodimer in solution; homoheptamer in the host membrane. After binding to GPI-anchored proteins in target membranes and proteolytic removal of the C-terminal propeptide, the protein assembles into a heptameric pre-pore complex. A further conformation change leads to insertion into the host membrane. Proteolytic cleavage and subsequent release of the propeptide trigger a major conformation change, leading to the formation of a heptameric pre-pore that then inserts into the host membrane.

It is found in the secreted. The protein localises to the host cell membrane. In terms of biological role, secreted, cytolytic toxin that forms pores in host membranes after proteolytic removal of a C-terminal propeptide, leading to destruction of the membrane permeability barrier and cell death. The pores are formed by transmembrane beta-strands and are approximately 3 nm in diameter. The protein is Aerolysin-4 (ahh4) of Aeromonas hydrophila.